A 163-amino-acid chain; its full sequence is Nucleotide-binding protein HSM_1099 (163 aa).

It belongs to the YajQ family.

Its function is as follows. Nucleotide-binding protein. The chain is Nucleotide-binding protein HSM_1099 from Histophilus somni (strain 2336) (Haemophilus somnus).